Reading from the N-terminus, the 226-residue chain is UPF0758 protein CHY_0341 (226 aa).

Residues 104-226 (NFLNPDDVYN…YISMKAERLF (123 aa)) enclose the MPN domain. Residues His175, His177, and Asp188 each contribute to the Zn(2+) site. The short motif at 175 to 188 (HNHPSGDPTPSKED) is the JAMM motif element.

It belongs to the UPF0758 family.

In Carboxydothermus hydrogenoformans (strain ATCC BAA-161 / DSM 6008 / Z-2901), this protein is UPF0758 protein CHY_0341.